Reading from the N-terminus, the 509-residue chain is Methionine--tRNA ligase (509 aa).

The short motif at Y12 to H22 is the 'HIGH' region element. The 'KMSKS' region signature appears at K295–S299. K298 is an ATP binding site.

The protein belongs to the class-I aminoacyl-tRNA synthetase family. MetG type 2B subfamily. As to quaternary structure, monomer.

It is found in the cytoplasm. The catalysed reaction is tRNA(Met) + L-methionine + ATP = L-methionyl-tRNA(Met) + AMP + diphosphate. Functionally, is required not only for elongation of protein synthesis but also for the initiation of all mRNA translation through initiator tRNA(fMet) aminoacylation. In Rickettsia bellii (strain RML369-C), this protein is Methionine--tRNA ligase.